Reading from the N-terminus, the 816-residue chain is Acyl-homoserine lactone acylase QuiP (816 aa).

An N-terminal signal peptide occupies residues Met-1–Ala-33. The active-site Nucleophile is Ser-262.

Belongs to the peptidase S45 family. As to quaternary structure, heterodimer of an alpha subunit and a beta subunit processed from the same precursor.

It localises to the periplasm. It catalyses the reaction an N-acyl-L-homoserine lactone + H2O = L-homoserine lactone + a carboxylate. In terms of biological role, catalyzes the deacylation of acyl-homoserine lactone (AHL or acyl-HSL), releasing homoserine lactone (HSL) and the corresponding fatty acid. Possesses a specificity for the degradation of long-chain acyl-HSLs (side chains of seven or more carbons in length). The protein is Acyl-homoserine lactone acylase QuiP (quiP) of Pseudomonas fluorescens (strain Pf0-1).